The primary structure comprises 700 residues: non-specific serine/threonine protein kinase Cdc7 (700 aa).

Residues 127–644 (FDVHSRIGNG…AEEALKHPFF (518 aa)) form the Protein kinase domain. Residues 133–141 (IGNGTFSTV) and K163 each bind ATP. The active-site Proton acceptor is the D250.

The protein belongs to the protein kinase superfamily. Ser/Thr protein kinase family. Component of the Dbf4-dependent kinase (DDK) complex consisting of Cdc7 and the Dbf4 ortholog chif. Interacts with chif (via the processed polypeptide Chiffon-A); the interaction is direct.

The catalysed reaction is L-seryl-[protein] + ATP = O-phospho-L-seryl-[protein] + ADP + H(+). It carries out the reaction L-threonyl-[protein] + ATP = O-phospho-L-threonyl-[protein] + ADP + H(+). Its activity is regulated as follows. Activated by chif. Inhibited by the synthetic compound XL413. Catalytic component of the Dbf4-dependent kinase (DDK) complex. Phosphorylates components of the pre-replication complex, including Mcm2 and, to a lesser extent, Mcm4. Phosphorylates histones, including H3 and H2B. Required for DNA replication and mitotic proliferation, including during the endoreplication and amplification stages of DNA replication in egg chamber follicle cells of the ovary. This Drosophila melanogaster (Fruit fly) protein is non-specific serine/threonine protein kinase Cdc7.